The following is a 441-amino-acid chain: Asparagine--tRNA ligase, mitochondrial (441 aa).

It belongs to the class-II aminoacyl-tRNA synthetase family.

The protein localises to the mitochondrion. It carries out the reaction tRNA(Asn) + L-asparagine + ATP = L-asparaginyl-tRNA(Asn) + AMP + diphosphate + H(+). The protein is Asparagine--tRNA ligase, mitochondrial (slm5) of Schizosaccharomyces pombe (strain 972 / ATCC 24843) (Fission yeast).